A 250-amino-acid polypeptide reads, in one-letter code: MPLPLLNCDMGESFGNWKMGLDDEVMPYVDCANIACGFHASDPGIMRRTVALAVQHGVRVGAHPAYPDLQGFGRRSLACSPREVEDMMLYQIGALEGMCRAEGTRVAYVKPHGALYNDMARDPELLRGAMRAVLAYDPELPLLAMATADPAPMRALAEEMGVTLWFETFADRAYDPQGRLVSRREPGAVHHDREAIVAQAVTLARGEPLTANDGSLLHLPADTLCVHGDNAESVAAVRAIRDAFDGLARE.

This sequence belongs to the LamB/PxpA family. Forms a complex composed of PxpA, PxpB and PxpC.

The catalysed reaction is 5-oxo-L-proline + ATP + 2 H2O = L-glutamate + ADP + phosphate + H(+). Functionally, catalyzes the cleavage of 5-oxoproline to form L-glutamate coupled to the hydrolysis of ATP to ADP and inorganic phosphate. In Chromohalobacter salexigens (strain ATCC BAA-138 / DSM 3043 / CIP 106854 / NCIMB 13768 / 1H11), this protein is 5-oxoprolinase subunit A.